We begin with the raw amino-acid sequence, 389 residues long: Anhydro-N-acetylmuramic acid kinase (389 aa).

11 to 18 contacts ATP; the sequence is GTSLDGVD.

The protein belongs to the anhydro-N-acetylmuramic acid kinase family.

It carries out the reaction 1,6-anhydro-N-acetyl-beta-muramate + ATP + H2O = N-acetyl-D-muramate 6-phosphate + ADP + H(+). Its pathway is amino-sugar metabolism; 1,6-anhydro-N-acetylmuramate degradation. It functions in the pathway cell wall biogenesis; peptidoglycan recycling. Catalyzes the specific phosphorylation of 1,6-anhydro-N-acetylmuramic acid (anhMurNAc) with the simultaneous cleavage of the 1,6-anhydro ring, generating MurNAc-6-P. Is required for the utilization of anhMurNAc either imported from the medium or derived from its own cell wall murein, and thus plays a role in cell wall recycling. The sequence is that of Anhydro-N-acetylmuramic acid kinase from Albidiferax ferrireducens (strain ATCC BAA-621 / DSM 15236 / T118) (Rhodoferax ferrireducens).